The primary structure comprises 230 residues: Urease accessory protein UreG (230 aa).

Residues 1–31 (MPPHFLSADSTGQPHRHADRPKRVRTPGEPL) are disordered. Over residues 14 to 25 (PHRHADRPKRVR) the composition is skewed to basic residues. GTP is bound at residue 37–44 (GPVGSGKT).

It belongs to the SIMIBI class G3E GTPase family. UreG subfamily. In terms of assembly, homodimer. UreD, UreF and UreG form a complex that acts as a GTP-hydrolysis-dependent molecular chaperone, activating the urease apoprotein by helping to assemble the nickel containing metallocenter of UreC. The UreE protein probably delivers the nickel.

The protein localises to the cytoplasm. Facilitates the functional incorporation of the urease nickel metallocenter. This process requires GTP hydrolysis, probably effectuated by UreG. The chain is Urease accessory protein UreG from Mycobacterium sp. (strain JLS).